Reading from the N-terminus, the 89-residue chain is Large ribosomal subunit protein bL31B (89 aa).

It belongs to the bacterial ribosomal protein bL31 family. Type B subfamily. As to quaternary structure, part of the 50S ribosomal subunit.

The polypeptide is Large ribosomal subunit protein bL31B (Corynebacterium aurimucosum (strain ATCC 700975 / DSM 44827 / CIP 107346 / CN-1) (Corynebacterium nigricans)).